The primary structure comprises 429 residues: Ribosomal RNA small subunit methyltransferase B (429 aa).

Residues 254 to 260 (CAAPGGK), aspartate 277, aspartate 303, and aspartate 322 each bind S-adenosyl-L-methionine. The active-site Nucleophile is cysteine 375.

This sequence belongs to the class I-like SAM-binding methyltransferase superfamily. RsmB/NOP family.

The protein resides in the cytoplasm. The catalysed reaction is cytidine(967) in 16S rRNA + S-adenosyl-L-methionine = 5-methylcytidine(967) in 16S rRNA + S-adenosyl-L-homocysteine + H(+). Specifically methylates the cytosine at position 967 (m5C967) of 16S rRNA. This is Ribosomal RNA small subunit methyltransferase B from Escherichia coli O157:H7.